A 244-amino-acid polypeptide reads, in one-letter code: U11/U12 small nuclear ribonucleoprotein 35 kDa protein (244 aa).

The RRM domain occupies 51-129 (LTLFVARLNS…HEIFVDYELE (79 aa)). Over residues 146–162 (GKKESGQLRFGGRDRPF) the composition is skewed to basic and acidic residues. A disordered region spans residues 146–244 (GKKESGQLRF…KTRDKRDRSK (99 aa)). Lysine 172 is covalently cross-linked (Glycyl lysine isopeptide (Lys-Gly) (interchain with G-Cter in SUMO2)). Composition is skewed to basic and acidic residues over residues 173 to 185 (NEPHREGKRERRE) and 192 to 244 (RHWD…DRSK).

In terms of assembly, component of the U11/U12 snRNPs that are part of the U12-type spliceosome.

Its subcellular location is the nucleus. The chain is U11/U12 small nuclear ribonucleoprotein 35 kDa protein (Snrnp35) from Rattus norvegicus (Rat).